Consider the following 815-residue polypeptide: TBC1 domain family member 5 (815 aa).

Ser44 is subject to Phosphoserine. Positions 56 to 64 are required for interaction with retromer; involved in interaction with ATG8 family proteins; it reads MKEWEELFV. The short motif at 57-62 is the LIR 1 element; that stretch reads KEWEEL. Residues 81-359 form the Rab-GAP TBC domain; that stretch reads LRSSRFRSIC…VVWDALFADS (279 aa). The residue at position 448 (Arg448) is an Asymmetric dimethylarginine; alternate. An Omega-N-methylarginine; alternate modification is found at Arg448. Residue Ser460 is modified to Phosphoserine. Positions 475–591 are disordered; that stretch reads PGSMGGPVPG…SATKKDSFFS (117 aa). Low complexity-rich tracts occupy residues 483 to 492 and 510 to 539; these read PGNNSSSSFS and QQQQ…QQQQ. Ser546, Ser563, Ser565, Ser568, Ser578, and Ser608 each carry phosphoserine. Over residues 556-568 the composition is skewed to low complexity; sequence SSKTISSSPSIES. 2 disordered regions span residues 702–733 and 754–815; these read SGQD…PDDF and QPLL…PLDI. Positions 754-765 are enriched in polar residues; sequence QPLLTLRSTSGK. Positions 783 to 796 are enriched in low complexity; sequence PASASASSSNPSSS. Positions 805-809 match the LIR 2 motif; the sequence is SGFTI. The required for interaction with ATG8 family proteins stretch occupies residues 806-811; that stretch reads GFTIVS. Ser811 bears the Phosphoserine mark.

In terms of assembly, interacts with MAP1LC3A, MAP1LC3B, MAP1LC3C, GABARAP, GABARAPL1, GABARAPL2. Interacts with VPS29 and VPS35; indicative for an association with retromer CSC subcomplex. MAP1LC3A and VPS29 compete for binding to TBC1D5. Interacts with AP2M1; indicative for an association with the AP2 complex. Interacts with ULK1 and ATG13 (phosphorylated); indicative for an association with the activated ULK1-ATG13-FIP200 complex. Interacts with ATG9A; the interactions seems to be restricted to the AP2-clathrin-associated fraction of ATG9A.

The protein localises to the endosome membrane. It localises to the cytoplasmic vesicle. It is found in the autophagosome. Functionally, may act as a GTPase-activating protein for Rab family protein(s). May act as a GAP for RAB7A. Can displace RAB7A and retromer CSC subcomplex from the endosomal membrane to the cytosol; at least retromer displacement seems to require its catalytic activity. Required for retrograde transport of cargo proteins from endosomes to the trans-Golgi network (TGN); the function seems to require its catalytic activity. Involved in regulation of autophagy. May act as a molecular switch between endosomal and autophagosomal transport and is involved in reprogramming vesicle trafficking upon autophagy induction. Involved in the trafficking of ATG9A upon activation of autophagy. May regulate the recruitment of ATG9A-AP2-containing vesicles to autophagic membranes. The polypeptide is TBC1 domain family member 5 (Tbc1d5) (Mus musculus (Mouse)).